Consider the following 64-residue polypeptide: Large ribosomal subunit protein bL32 (64 aa).

A disordered region spans residues 1 to 23; the sequence is MAVQKSRVTPSRRGQRRSHDALA.

This sequence belongs to the bacterial ribosomal protein bL32 family.

The protein is Large ribosomal subunit protein bL32 of Xylella fastidiosa (strain M23).